The following is a 277-amino-acid chain: Phosphoribosylaminoimidazole-succinocarboxamide synthase (277 aa).

It belongs to the SAICAR synthetase family.

The catalysed reaction is 5-amino-1-(5-phospho-D-ribosyl)imidazole-4-carboxylate + L-aspartate + ATP = (2S)-2-[5-amino-1-(5-phospho-beta-D-ribosyl)imidazole-4-carboxamido]succinate + ADP + phosphate + 2 H(+). It functions in the pathway purine metabolism; IMP biosynthesis via de novo pathway; 5-amino-1-(5-phospho-D-ribosyl)imidazole-4-carboxamide from 5-amino-1-(5-phospho-D-ribosyl)imidazole-4-carboxylate: step 1/2. The sequence is that of Phosphoribosylaminoimidazole-succinocarboxamide synthase from Salinispora arenicola (strain CNS-205).